A 255-amino-acid polypeptide reads, in one-letter code: MINAPLHARQTLDLAGFRPQADARPVEWLISEAPVPYPDAVAAMESRAAAIAAGDAAELVWLLEHPPLYTSGTSGQSTDLLDPRFPLHTTGRGGQLTYHGPGQRVAYVMLDLKRRRPDVRAYVAALEQWIIATLDAFNVRGERRENRVGVWVARPDKGADHEDKIAAIGVRLKRWVSLHGIAINVEPDLSHFTAIVPCGISDPRYGVTSLVDLGLPVTMADADIALRAAFTEIFGATVDAPQVDPAVDAGARSPA.

The BPL/LPL catalytic domain occupies 54–238; that stretch reads GDAAELVWLL…AFTEIFGATV (185 aa). Residues 92 to 99, 167 to 169, and 180 to 182 contribute to the substrate site; these read RGGQLTYH, AIG, and GIA. Cysteine 198 functions as the Acyl-thioester intermediate in the catalytic mechanism.

Belongs to the LipB family.

It localises to the cytoplasm. The catalysed reaction is octanoyl-[ACP] + L-lysyl-[protein] = N(6)-octanoyl-L-lysyl-[protein] + holo-[ACP] + H(+). It participates in protein modification; protein lipoylation via endogenous pathway; protein N(6)-(lipoyl)lysine from octanoyl-[acyl-carrier-protein]: step 1/2. Functionally, catalyzes the transfer of endogenously produced octanoic acid from octanoyl-acyl-carrier-protein onto the lipoyl domains of lipoate-dependent enzymes. Lipoyl-ACP can also act as a substrate although octanoyl-ACP is likely to be the physiological substrate. In Rhodopseudomonas palustris (strain HaA2), this protein is Octanoyltransferase.